Here is an 833-residue protein sequence, read N- to C-terminus: DNA gyrase subunit A (833 aa).

Residues 34–500 (LPDVRDGLKP…AGDVRDIEDI (467 aa)) enclose the Topo IIA-type catalytic domain. Residue Tyr122 is the O-(5'-phospho-DNA)-tyrosine intermediate of the active site. A GyrA-box motif is present at residues 527-533 (QKRGGQG).

The protein belongs to the type II topoisomerase GyrA/ParC subunit family. Heterotetramer, composed of two GyrA and two GyrB chains. In the heterotetramer, GyrA contains the active site tyrosine that forms a transient covalent intermediate with DNA, while GyrB binds cofactors and catalyzes ATP hydrolysis.

Its subcellular location is the cytoplasm. The catalysed reaction is ATP-dependent breakage, passage and rejoining of double-stranded DNA.. A type II topoisomerase that negatively supercoils closed circular double-stranded (ds) DNA in an ATP-dependent manner to modulate DNA topology and maintain chromosomes in an underwound state. Negative supercoiling favors strand separation, and DNA replication, transcription, recombination and repair, all of which involve strand separation. Also able to catalyze the interconversion of other topological isomers of dsDNA rings, including catenanes and knotted rings. Type II topoisomerases break and join 2 DNA strands simultaneously in an ATP-dependent manner. In Chlamydia muridarum (strain MoPn / Nigg), this protein is DNA gyrase subunit A.